A 390-amino-acid chain; its full sequence is Lipid-A-disaccharide synthase (390 aa).

This sequence belongs to the LpxB family.

It carries out the reaction a lipid X + a UDP-2-N,3-O-bis[(3R)-3-hydroxyacyl]-alpha-D-glucosamine = a lipid A disaccharide + UDP + H(+). It functions in the pathway bacterial outer membrane biogenesis; LPS lipid A biosynthesis. Condensation of UDP-2,3-diacylglucosamine and 2,3-diacylglucosamine-1-phosphate to form lipid A disaccharide, a precursor of lipid A, a phosphorylated glycolipid that anchors the lipopolysaccharide to the outer membrane of the cell. The chain is Lipid-A-disaccharide synthase from Haemophilus influenzae (strain PittEE).